Reading from the N-terminus, the 138-residue chain is Abscisic stress-ripening protein 5 (138 aa).

Basic residues predominate over residues 1–13; it reads MAEEKHHHHLFHH. Disordered stretches follow at residues 1 to 27 and 106 to 138; these read MAEEKHHHHLFHHKKDDEPATGVDSYG and GAGGYAFHEHHEKKKDHKSAEESTGEKKHHLFG.

The protein belongs to the abscisic acid and water stress-induced protein family.

The protein localises to the nucleus. It localises to the cytoplasm. In terms of biological role, involved in tolerance to aluminum. Regulates the expression of different genes that collectively contribute to the protection of the cell in response to aluminum stress. The protein is Abscisic stress-ripening protein 5 of Oryza sativa subsp. indica (Rice).